Consider the following 572-residue polypeptide: Arginine--tRNA ligase (572 aa).

The short motif at 127–137 is the 'HIGH' region element; sequence ANPTGPLHVGH.

The protein belongs to the class-I aminoacyl-tRNA synthetase family. Monomer.

The protein resides in the cytoplasm. It carries out the reaction tRNA(Arg) + L-arginine + ATP = L-arginyl-tRNA(Arg) + AMP + diphosphate. The polypeptide is Arginine--tRNA ligase (Vesicomyosocius okutanii subsp. Calyptogena okutanii (strain HA)).